Consider the following 350-residue polypeptide: UDP-N-acetylenolpyruvoylglucosamine reductase (350 aa).

An FAD-binding PCMH-type domain is found at Val-25–Leu-194. Arg-166 is a catalytic residue. The active-site Proton donor is the Ser-243. Residue Glu-342 is part of the active site.

The protein belongs to the MurB family. FAD serves as cofactor.

Its subcellular location is the cytoplasm. The enzyme catalyses UDP-N-acetyl-alpha-D-muramate + NADP(+) = UDP-N-acetyl-3-O-(1-carboxyvinyl)-alpha-D-glucosamine + NADPH + H(+). It participates in cell wall biogenesis; peptidoglycan biosynthesis. Functionally, cell wall formation. This chain is UDP-N-acetylenolpyruvoylglucosamine reductase, found in Mycobacterium sp. (strain MCS).